A 187-amino-acid polypeptide reads, in one-letter code: UPF0301 protein YqgE (187 aa).

This sequence belongs to the UPF0301 (AlgH) family.

The polypeptide is UPF0301 protein YqgE (Salmonella choleraesuis (strain SC-B67)).